Here is a 212-residue protein sequence, read N- to C-terminus: ATP phosphoribosyltransferase (212 aa).

Belongs to the ATP phosphoribosyltransferase family. Short subfamily. As to quaternary structure, heteromultimer composed of HisG and HisZ subunits.

It localises to the cytoplasm. The enzyme catalyses 1-(5-phospho-beta-D-ribosyl)-ATP + diphosphate = 5-phospho-alpha-D-ribose 1-diphosphate + ATP. The protein operates within amino-acid biosynthesis; L-histidine biosynthesis; L-histidine from 5-phospho-alpha-D-ribose 1-diphosphate: step 1/9. Functionally, catalyzes the condensation of ATP and 5-phosphoribose 1-diphosphate to form N'-(5'-phosphoribosyl)-ATP (PR-ATP). Has a crucial role in the pathway because the rate of histidine biosynthesis seems to be controlled primarily by regulation of HisG enzymatic activity. The protein is ATP phosphoribosyltransferase of Prochlorococcus marinus (strain MIT 9515).